The primary structure comprises 494 residues: Maintenance of mitochondrial morphology protein 1 (494 aa).

The Lumenal portion of the chain corresponds to 1–25; the sequence is MGDDQSLRSTVAENDISANLSFTQG. The chain crosses the membrane as a helical span at residues 26-46; it reads FLLGQLSVVLLIGAFIKFFIF. At 47–494 the chain is on the cytoplasmic side; sequence GEAPPPPSRG…GTLPGGAAAN (448 aa). Disordered regions lie at residues 53-99, 278-330, and 395-494; these read PSRG…VPSS, PPLH…KSNV, and RTGV…AAAN. Positions 57 to 67 are enriched in basic residues; that stretch reads LSHRASTHRRS. 2 stretches are compositionally biased toward polar residues: residues 68–81 and 88–99; these read NSIY…GTSR and STSNVLRPVPSS. An SMP-LTD domain is found at 134–387; it reads QPESLDWFNV…EPRVQVVGLP (254 aa). Residues 278-290 are compositionally biased toward pro residues; it reads PPLHTPSPSPSPP. 2 stretches are compositionally biased toward polar residues: residues 300-318 and 406-415; these read THPT…NAQE and TGSNAASRSA. Residues 425 to 437 show a composition bias toward basic and acidic residues; it reads RADDIGREPDGLR.

It belongs to the MMM1 family. Homodimer. Component of the ER-mitochondria encounter structure (ERMES) or MDM complex, composed of mmm1, mdm10, mdm12 and mdm34. A mmm1 homodimer associates with one molecule of mdm12 on each side in a pairwise head-to-tail manner, and the SMP-LTD domains of mmm1 and mdm12 generate a continuous hydrophobic tunnel for phospholipid trafficking.

The protein resides in the endoplasmic reticulum membrane. Component of the ERMES/MDM complex, which serves as a molecular tether to connect the endoplasmic reticulum (ER) and mitochondria. Components of this complex are involved in the control of mitochondrial shape and protein biogenesis, and function in nonvesicular lipid trafficking between the ER and mitochondria. The mdm12-mmm1 subcomplex functions in the major beta-barrel assembly pathway that is responsible for biogenesis of all outer membrane beta-barrel proteins, and acts in a late step after the SAM complex. The mdm10-mdm12-mmm1 subcomplex further acts in the TOM40-specific pathway after the action of the mdm12-mmm1 complex. Essential for establishing and maintaining the structure of mitochondria and maintenance of mtDNA nucleoids. The sequence is that of Maintenance of mitochondrial morphology protein 1 from Aspergillus oryzae (strain ATCC 42149 / RIB 40) (Yellow koji mold).